Reading from the N-terminus, the 405-residue chain is Tryptophan synthase beta chain (405 aa).

Lys95 is subject to N6-(pyridoxal phosphate)lysine.

This sequence belongs to the TrpB family. In terms of assembly, tetramer of two alpha and two beta chains. Pyridoxal 5'-phosphate is required as a cofactor.

The catalysed reaction is (1S,2R)-1-C-(indol-3-yl)glycerol 3-phosphate + L-serine = D-glyceraldehyde 3-phosphate + L-tryptophan + H2O. It functions in the pathway amino-acid biosynthesis; L-tryptophan biosynthesis; L-tryptophan from chorismate: step 5/5. Functionally, the beta subunit is responsible for the synthesis of L-tryptophan from indole and L-serine. This chain is Tryptophan synthase beta chain, found in Pseudomonas putida (strain ATCC 700007 / DSM 6899 / JCM 31910 / BCRC 17059 / LMG 24140 / F1).